A 107-amino-acid chain; its full sequence is uncharacterized protein (107 aa).

This is an uncharacterized protein from Bacillus subtilis (strain 168).